Reading from the N-terminus, the 317-residue chain is Ribosomal protein L11 methyltransferase (317 aa).

S-adenosyl-L-methionine-binding residues include threonine 158, glycine 179, aspartate 201, and asparagine 244.

This sequence belongs to the methyltransferase superfamily. PrmA family.

The protein localises to the cytoplasm. It catalyses the reaction L-lysyl-[protein] + 3 S-adenosyl-L-methionine = N(6),N(6),N(6)-trimethyl-L-lysyl-[protein] + 3 S-adenosyl-L-homocysteine + 3 H(+). In terms of biological role, methylates ribosomal protein L11. The polypeptide is Ribosomal protein L11 methyltransferase (Streptococcus pyogenes serotype M6 (strain ATCC BAA-946 / MGAS10394)).